Reading from the N-terminus, the 427-residue chain is GTPase Obg (427 aa).

An Obg domain is found at Met-1–Ile-158. An OBG-type G domain is found at Ala-159–Lys-330. Residues Gly-165–Ser-172, Phe-190–Thr-194, Asp-212–Gly-215, Asn-282–Asp-285, and Ser-311–Ala-313 contribute to the GTP site. Residues Ser-172 and Thr-192 each coordinate Mg(2+). The region spanning Leu-347–His-427 is the OCT domain.

The protein belongs to the TRAFAC class OBG-HflX-like GTPase superfamily. OBG GTPase family. In terms of assembly, monomer. Mg(2+) serves as cofactor.

It is found in the cytoplasm. An essential GTPase which binds GTP, GDP and possibly (p)ppGpp with moderate affinity, with high nucleotide exchange rates and a fairly low GTP hydrolysis rate. Plays a role in control of the cell cycle, stress response, ribosome biogenesis and in those bacteria that undergo differentiation, in morphogenesis control. The sequence is that of GTPase Obg from Alkaliphilus metalliredigens (strain QYMF).